The primary structure comprises 165 residues: UPF0303 protein BamMC406_1480 (165 aa).

The protein belongs to the UPF0303 family.

This chain is UPF0303 protein BamMC406_1480, found in Burkholderia ambifaria (strain MC40-6).